A 518-amino-acid polypeptide reads, in one-letter code: GRIN2-like protein (518 aa).

Disordered stretches follow at residues 1-23 and 467-500; these read MGLE…QSRT and QTEP…FRTM. Over residues 476–494 the composition is skewed to basic and acidic residues; that stretch reads KSDEDPLNKEPSSDKMEKK.

As to quaternary structure, may interact with GNAO1.

In terms of biological role, may be involved in neurite outgrowth. The chain is GRIN2-like protein from Gallus gallus (Chicken).